A 661-amino-acid polypeptide reads, in one-letter code: UvrABC system protein B (661 aa).

One can recognise a Helicase ATP-binding domain in the interval 28–414 (KGVKEGKRHQ…HTDEMIEQII (387 aa)). 41–48 (GATGTGKT) is an ATP binding site. Positions 94–117 (YYDYYQPEAYVPSTDTFIEKDASI) match the Beta-hairpin motif. The Helicase C-terminal domain occupies 432–598 (QIDDLLSEIQ…TINKKIHDVI (167 aa)). The tract at residues 604-625 (NDETNEKQQTELPKKMTKKERQ) is disordered. Positions 607–617 (TNEKQQTELPK) are enriched in basic and acidic residues. One can recognise a UVR domain in the interval 625–660 (QKTIENIEKEMKKAAKDLDFEKATELRDMLFELKSE).

This sequence belongs to the UvrB family. In terms of assembly, forms a heterotetramer with UvrA during the search for lesions. Interacts with UvrC in an incision complex.

Its subcellular location is the cytoplasm. Functionally, the UvrABC repair system catalyzes the recognition and processing of DNA lesions. A damage recognition complex composed of 2 UvrA and 2 UvrB subunits scans DNA for abnormalities. Upon binding of the UvrA(2)B(2) complex to a putative damaged site, the DNA wraps around one UvrB monomer. DNA wrap is dependent on ATP binding by UvrB and probably causes local melting of the DNA helix, facilitating insertion of UvrB beta-hairpin between the DNA strands. Then UvrB probes one DNA strand for the presence of a lesion. If a lesion is found the UvrA subunits dissociate and the UvrB-DNA preincision complex is formed. This complex is subsequently bound by UvrC and the second UvrB is released. If no lesion is found, the DNA wraps around the other UvrB subunit that will check the other stand for damage. This Staphylococcus haemolyticus (strain JCSC1435) protein is UvrABC system protein B.